The following is a 523-amino-acid chain: Beta-glucosidase 31 (523 aa).

The first 22 residues, Met1–Ala22, serve as a signal peptide directing secretion. A beta-D-glucoside-binding positions include Gln49, His149, and Asn194–Glu195. Glu195 (proton donor) is an active-site residue. Cys214 and Cys223 are disulfide-bonded. N-linked (GlcNAc...) asparagine glycosylation occurs at Asn227. Positions 339 and 413 each coordinate a beta-D-glucoside. The Nucleophile role is filled by Glu413. An N-linked (GlcNAc...) asparagine glycan is attached at Asn450. A beta-D-glucoside-binding positions include Trp460, Glu467 to Tyr468, and Phe476.

It belongs to the glycosyl hydrolase 1 family.

It carries out the reaction Hydrolysis of terminal, non-reducing beta-D-glucosyl residues with release of beta-D-glucose.. This is Beta-glucosidase 31 (BGLU31) from Oryza sativa subsp. japonica (Rice).